Reading from the N-terminus, the 89-residue chain is Co-chaperonin GroES (89 aa).

This sequence belongs to the GroES chaperonin family. In terms of assembly, heptamer of 7 subunits arranged in a ring. Interacts with the chaperonin GroEL.

Its subcellular location is the cytoplasm. Together with the chaperonin GroEL, plays an essential role in assisting protein folding. The GroEL-GroES system forms a nano-cage that allows encapsulation of the non-native substrate proteins and provides a physical environment optimized to promote and accelerate protein folding. GroES binds to the apical surface of the GroEL ring, thereby capping the opening of the GroEL channel. This Kosmotoga olearia (strain ATCC BAA-1733 / DSM 21960 / TBF 19.5.1) protein is Co-chaperonin GroES.